Consider the following 185-residue polypeptide: Threonylcarbamoyl-AMP synthase (185 aa).

The YrdC-like domain maps to 1-185 (MDNLQQVVSA…AFSDTVLRQG (185 aa)).

Belongs to the SUA5 family. TsaC subfamily.

It is found in the cytoplasm. It catalyses the reaction L-threonine + hydrogencarbonate + ATP = L-threonylcarbamoyladenylate + diphosphate + H2O. Its function is as follows. Required for the formation of a threonylcarbamoyl group on adenosine at position 37 (t(6)A37) in tRNAs that read codons beginning with adenine. Catalyzes the conversion of L-threonine, HCO(3)(-)/CO(2) and ATP to give threonylcarbamoyl-AMP (TC-AMP) as the acyladenylate intermediate, with the release of diphosphate. The sequence is that of Threonylcarbamoyl-AMP synthase from Photobacterium profundum (strain SS9).